The chain runs to 1693 residues: Non-structural polyprotein pORF1 (1693 aa).

Residues 56 to 240 (VFRPEVFWNQ…HDVSNLRSWI (185 aa)) form the Alphavirus-like MT domain. The tract at residues 60–240 (EVFWNQPIQR…HDVSNLRSWI (181 aa)) is methyltransferase. The interval 241 to 439 (RTTKVTGDHP…FYAQCRRWLS (199 aa)) is Y-domain. Cysteine 434 and cysteine 481 are oxidised to a cystine. Residues 442 to 509 (FHLDPRVLVF…ESYEGSDVDP (68 aa)) are putative protease. The zinc-binding stretch occupies residues 510–691 (AESAISDISG…FSPGHVWESA (182 aa)). Positions 671, 673, and 686 each coordinate Zn(2+). Residues 712 to 778 (SSPTRPDLGF…AITHQTARHR (67 aa)) form a hinge region. The interval 716–769 (RPDLGFMSEPPIPSRAATPTLAAPLPPLAPDPSPPSSAPALDEPASAATSGVPA) is disordered. Positions 739-752 (PLPPLAPDPSPPSS) are enriched in pro residues. Residues 753–763 (APALDEPASAA) are compositionally biased toward low complexity. In terms of domain architecture, Macro spans 775 to 921 (ARHRRLLFTY…LYLPELAARW (147 aa)). The segment at 785 to 942 (PDGSKVFAGS…TITEDAARTA (158 aa)) is X-domain. Residues 934–1082 (ITEDAARTAN…RPDLAPTSWW (149 aa)) enclose the (+)RNA virus helicase ATP-binding domain. An NTPase/helicase region spans residues 960–1204 (GCRVTPGVVQ…ISDAIVNNFF (245 aa)). Position 975–982 (975–982 (GVPGSGKS)) interacts with ATP. Residues 1083 to 1216 (HVTHRCPADV…GGEIGHQRPS (134 aa)) enclose the (+)RNA virus helicase C-terminal domain. The tract at residues 1207–1693 (GGEIGHQRPS…LTNSILCRVE (487 aa)) is RNA-directed RNA polymerase. One can recognise a RdRp catalytic domain in the interval 1454 to 1565 (SMVFENDFSE…LCSEYRQSPG (112 aa)).

The protein belongs to the hepevirus non-structural polyprotein family. In terms of assembly, the protease domain interacts with host EIF2AK4 (via C-terminus); this interaction inhibits dimerization of EIF2AK4 and prevents EIF2AK4-mediated phosphorylation of host EIF2A. It depends on Mg(2+) as a cofactor. In terms of processing, ORF1 polyprotein does not seem to be processed into distinct enzymatic domains by a viral protease belonging to ORF1, but could be processed by a host serine protease like thrombin.

It localises to the host cytoplasm. The protein localises to the host perinuclear region. It carries out the reaction RNA(n) + a ribonucleoside 5'-triphosphate = RNA(n+1) + diphosphate. It catalyses the reaction GTP + S-adenosyl-L-methionine = N(7)-methyl-GTP + S-adenosyl-L-homocysteine. With respect to regulation, putative protease: Inhibited by chymostatin. Functionally, methyltransferase: Displays a capping enzyme activity. This function is necessary since all viral RNAs are synthesized in the cytoplasm, and host capping enzymes are restricted to the nucleus. The enzymatic reaction involves a covalent link between 7-methyl-GMP and the methyltransferase, whereas eukaryotic capping enzymes form a covalent complex only with GMP. Methyltransferase catalyzes transfer of a methyl group from S-adenosylmethionine to GTP and GDP to yield m(7)GTP or m(7)GDP. GDP is a better substrate than GTP. This enzyme also displays guanylyltransferase activity to form a covalent complex, methyltransferase-m(7)GMP, from which 7-methyl-GMP is transferred to the mRNA to create the cap structure. Y-domain: Indispensable for virus replication. In terms of biological role, putative protease: The putative protease domain although necessary for replication of the virus may not be a protease but rather a structural Zn(2+)-binding domain. Inhibits induction of IFN-beta by MDA5 and RIG-I pathways and down-regulates the expression of MDA5. Its function is as follows. NTPase/helicase: Multi-functional protein that exhibits NTPase and RNA unwinding activities. Hydrolyzes all NTPs efficiently and unwinds RNA duplexes containing 5' overhangs. Possesses a sequence independent RNA-5'-triphosphatase (RTPase) activity suggestive of its role in forming viral cap structure. Also participates in viral genome replication, RNA translocation and genome packaging/unpackaging. Functionally, RNA-directed RNA polymerase: Plays an essential role in the virus replication. Binds to the 3'-end of the genomic RNA to initiate viral replication. The chain is Non-structural polyprotein pORF1 from Bandicota bengalensis (lesser bandicoot rat).